The sequence spans 4558 residues: Multifunctional-autoprocessing repeats-in-toxin (4558 aa).

An N-terminal signal peptide occupies residues 1–32; it reads MVFYLIPKRRVWLMGKPFWRSVEYFFTGNYSA. RtxA repeat units follow at residues 114–131, 134–151, 154–170, 174–197, 200–217, 220–237, 268–285, 288–304, 594–611, 614–630, 634–651, 654–668, 751–763, 769–781, 792–808, 811–826, 830–845, 851–865, 868–885, 887–901, 906–920, 925–942, 944–960, 982–994, 1001–1016, 1041–1053, 1077–1089, 1097–1112, 1120–1132, 1135–1152, 1155–1169, 1173–1189, 1194–1209, 1211–1227, 1230–1246, 1252–1266, 1268–1285, 1306–1323, and 1325–1342; these read GAAG…GDVS, GAAA…GNVT, GAGG…QGNL, GAGA…GDVT, GAGA…GNIT, GAGA…GDIT, GVGG…GDIH, GGGA…GNDF, GAGG…GNVH, GGGI…FGNT, GGGA…GDLT, GAGL…SEQG, AGGA…MGEG, MLGG…HISN, ALGG…GNTL, MGGG…DGTT, MVGG…NGDT, GVGN…GQTL, MGAA…TSIA, MIGA…GEGN, MGGL…GNGD, MVAE…MSVA, MLAK…GTTL, MIGQ…KVGN, MVGK…DGTS, GKAN…GDGL, AAAK…HVGD, AGKG…GTTV, GNVM…GTTI, AKGK…LGVN, WGQA…DGDR, AKGE…GQEV, GEAN…DDYT, AWGK…GQNV, AKGE…GDSF, KGNI…MQVT, AKGQ…LNVT, AWGK…LNVA, and MKGK…LNIN. Disordered regions lie at residues 1623–1688, 1752–1779, and 1791–1890; these read HATQ…KEES, TLSD…QNRA, and DAEK…NADG. The span at 1625–1634 shows a compositional bias: polar residues; that stretch reads TQNPAAQNAL. Over residues 1635–1654 the composition is skewed to basic and acidic residues; sequence SDKERAEADRQRLEQEKQKQ. The span at 1660 to 1679 shows a compositional bias: polar residues; the sequence is GSQSQLESTDQQALENNGQA. Over residues 1791-1815 the composition is skewed to basic and acidic residues; it reads DAEKRKADALAKGKDAQQAESDAHH. Residues 1879–1888 are compositionally biased toward polar residues; sequence HVNTDSQTNA. The ACD domain occupies 1988–2422; it reads VPGFKSHFAS…HAEQWAKITA (435 aa). 1999–2003 lines the ATP pocket; it reads SIGIE. The Mg(2+) site is built by E2003, E2065, and Q2149. ATP is bound at residue R2255. E2326 contributes to the Mg(2+) binding site. The segment at 2574–2658 is membrane localization region (MLD); the sequence is ELMSVTELLD…SLLNQVNTRL (85 aa). The segment at 2734 to 3098 is rho inactivation domain (RID); it reads EYGQTVADTI…HQVTDVLDAL (365 aa). Residues 3195–3310 form an ABH effector region region; that stretch reads VVLFLHGSGS…MPSMTKAITA (116 aa). The disordered stretch occupies residues 3404–3426; sequence ASVDEDLDQQGLDTTSTKDQGIS. Polar residues predominate over residues 3414–3426; it reads GLDTTSTKDQGIS. One can recognise a Peptidase C80 domain in the interval 3462 to 3646; sequence PTTDGGETRF…AENNKVSLSW (185 aa). Residues 3468-3470, 3495-3496, and R3526 each bind 1D-myo-inositol hexakisphosphate; these read ETR and KH. The active-site For cysteine protease activity is the H3532. S3577 provides a ligand contact to 1D-myo-inositol hexakisphosphate. C3581 serves as the catalytic Nucleophile; for cysteine protease activity. Residues 3610 to 3612, 3623 to 3624, K3636, and K3641 each bind 1D-myo-inositol hexakisphosphate; these read SVR and RK.

Mg(2+) serves as cofactor.

The protein localises to the secreted. It localises to the host cytoplasm. It is found in the host cytosol. Its subcellular location is the host cell membrane. The enzyme catalyses L-lysyl-/S-(2E,6E,10E)-geranylgeranyl-L-cysteinyl-[protein] + hexadecanoyl-CoA = N(6)-hexadecanoyl-L-lysyl-/S-(2E,6E,10E)-geranylgeranyl-L-cysteinyl-[protein] + CoA + H(+). The catalysed reaction is L-lysyl-/S-(2E,6E,10E)-geranylgeranyl-L-cysteinyl-[protein] + dodecanoyl-CoA = N(6)-dodecanoyl-L-lysyl-/S-(2E,6E,10E)-geranylgeranyl-L-cysteinyl-[protein] + CoA + H(+). It carries out the reaction L-lysyl-/S-(2E,6E,10E)-geranylgeranyl-L-cysteinyl-[protein] + decanoyl-CoA = N(6)-decanoyl-L-lysyl-/S-(2E,6E,10E)-geranylgeranyl-L-cysteinyl-[protein] + CoA + H(+). Protease activity is inhibited by N-ethylmaleimide but not other protease inhibitors. Protease activity is inhibited by aza-leucine epoxide. Protease activity is activated upon binding inositol hexakisphosphate (InsP6) via an allosteric mechanism: the active site is disordered or occluded in the absence of InsP6, protecting the protease active-site sulfhydryl until the toxin enters a eukaryotic cell. Upon processing at the Leu-3441-Ala-3442 site, the peptidase C80 domain is converted to a form with much reduced affinity for InsP6, but is reactivated for high affinity binding of InsP6 by cooperative binding of both a new substrate and InsP6. Reactivation allows cleavage at other sites, specifically at Leu residues between the effector domains. In terms of biological role, precursor of a multifunctional toxin that causes destruction of the actin cytoskeleton by covalent cross-linking of actin and inactivation of Rho GTPases when translocated into the host cytoplasm. Upon translocation into the host cell, undergoes autoprocessing in cis mediated by the peptidase C80 domain (also named CPD domain): the protease activity is activated upon binding inositol hexakisphosphate (InsP6) present at the host cell membrane and delivers the Cysteine protease domain-containing toxin F3 chain to the host cytosol. The Cysteine protease domain-containing toxin F3 chain will then further cleave and release effector toxin chains that cause disassembly of the actin cytoskeleton and enhance V.cholerae colonization of the small intestine, possibly by facilitating evasion of phagocytic cells. Its function is as follows. Following autocatalytic cleavage in cis at the Leu-3441-Ala-3442 site, this chain mediates processing in trans to release other individual toxin chains to the host cytosol. Released effector toxin chains cause disassembly of the actin cytoskeleton and enhance V.cholerae colonization of the small intestine, possibly by facilitating evasion of phagocytic cells. Actin-directed toxin that catalyzes the covalent cross-linking of host cytoplasmic monomeric actin. Mediates the cross-link between 'Lys-50' of one monomer and 'Glu-270' of another actin monomer, resulting in formation of highly toxic actin oligomers that cause cell rounding. The toxin can be highly efficient at very low concentrations by acting on formin homology family proteins: toxic actin oligomers bind with high affinity to formins and adversely affect both nucleation and elongation abilities of formins, causing their potent inhibition in both profilin-dependent and independent manners. Acts as an acid--amino-acid ligase that transfers the gamma-phosphoryl group of ATP to the 'Glu-270' actin residue, resulting in the formation of an activated acyl phosphate intermediate. This intermediate is further hydrolyzed and the energy of hydrolysis is utilized for the formation of the amide bond between actin subunits. Functionally, N-epsilon-fatty acyltransferase that mediates lysine-palmitoylation of host Rho GTPase proteins, with a strong preference for host Rac1. After delivery to the host cytosol, localizes to the host cell membrane where it palmitoylates host Rho GTPase proteins, resulting in loss of all active GTP-bound Rho and subsequent actin depolymerization. Prenylation of host Rac1 at the C-terminus is required for lysine-palmitoylation. In terms of biological role, indirectly activates the small GTPase CDC42. The protein is Multifunctional-autoprocessing repeats-in-toxin of Vibrio cholerae serotype O1 (strain ATCC 39315 / El Tor Inaba N16961).